The following is a 508-amino-acid chain: Maturase K (508 aa).

The protein belongs to the intron maturase 2 family. MatK subfamily.

It localises to the plastid. It is found in the chloroplast. In terms of biological role, usually encoded in the trnK tRNA gene intron. Probably assists in splicing its own and other chloroplast group II introns. The polypeptide is Maturase K (Ranunculus lingua (Greater spearwort)).